Reading from the N-terminus, the 1129-residue chain is ATP-dependent DNA helicase mph1 (1129 aa).

Disordered regions lie at residues 1–101 (MTGS…FEDA), 124–222 (TQLT…QNEG), and 236–306 (DAFD…TQHK). Over residues 45–63 (DGTASDVRRRPSENRESQR) the composition is skewed to basic and acidic residues. 2 stretches are compositionally biased toward polar residues: residues 203–222 (NTKA…QNEG) and 242–285 (ISLS…QTDQ). The segment covering 297-306 (QKDEPPTQHK) has biased composition (basic and acidic residues). Residues 331–499 (IAQKGLFHNL…AVIDGLDIAR (169 aa)) enclose the Helicase ATP-binding domain. ATP is bound at residue 344-351 (LPTGLGKT). The short motif at 447–450 (DEAH) is the DEAH box element. The Helicase C-terminal domain maps to 674-843 (VLNHFMDAGE…GSRFTFHDDI (170 aa)). Disordered stretches follow at residues 863 to 930 (IPDE…VEIP), 1018 to 1060 (RQGD…STED), and 1072 to 1129 (SVVK…DSDD). Composition is skewed to basic residues over residues 877–889 (RRGR…PKKF) and 1028–1044 (SPRH…KPRY). Polar residues predominate over residues 1077–1086 (QKQQPFYSSQ).

It belongs to the DEAD box helicase family. DEAH subfamily. FANCM sub-subfamily. Interacts with the MHF histone-fold complex to form the FANCM-MHF complex.

Its subcellular location is the nucleus. The enzyme catalyses ATP + H2O = ADP + phosphate + H(+). In terms of biological role, ATP-dependent DNA helicase involved in DNA damage repair by homologous recombination and in genome maintenance. Capable of unwinding D-loops. Plays a role in limiting crossover recombinants during mitotic DNA double-strand break (DSB) repair. Component of a FANCM-MHF complex which promotes gene conversion at blocked replication forks, probably by reversal of the stalled fork. In Aspergillus oryzae (strain ATCC 42149 / RIB 40) (Yellow koji mold), this protein is ATP-dependent DNA helicase mph1.